The following is a 226-amino-acid chain: MKLVLKISGKFFDEENIENFISLRNTIKNIVNEGHRLAIVSGGGSTARKYIKIGRELGVNEAHLDLLGIWASRLNAYLLTFILSDLSYMKVPENLEEFIEKWESEKVVITGGFQPGQSTATVAALVSEAIAADYLILATNVDGVYDKDPRYNKDAKLLSKLNTETLKKILETSQSVKAGTYELLDPLAIKIIERSKIKVIVMNYKRLNKILDIIHGKDIGSIIEPM.

6 to 10 provides a ligand contact to ATP; that stretch reads KISGK. Residue Gly-43 participates in UMP binding. ATP-binding residues include Gly-44 and Arg-48. Residues Asp-65 and 113-119 each bind UMP; that span reads FQPGQST. ATP-binding residues include Thr-139, Asn-140, Tyr-145, and Asp-148.

This sequence belongs to the UMP kinase family. As to quaternary structure, homohexamer.

It localises to the cytoplasm. It carries out the reaction UMP + ATP = UDP + ADP. It functions in the pathway pyrimidine metabolism; CTP biosynthesis via de novo pathway; UDP from UMP (UMPK route): step 1/1. With respect to regulation, inhibited by UTP. Functionally, catalyzes the reversible phosphorylation of UMP to UDP. This Sulfurisphaera tokodaii (strain DSM 16993 / JCM 10545 / NBRC 100140 / 7) (Sulfolobus tokodaii) protein is Uridylate kinase.